The following is a 231-amino-acid chain: MNTQEIINLIANSKKRTIAKAYVSGNLKNIKLENVEFVGNELFGVLFGDLKDIENTINKNDIKNYKIEILAKNSAIPLADIKKYNARIEPGAIIRDMVEIGDGAVIMMGAVINIGAVIGEKTMIDMNTVIGGRAIIGKNCHIGAGSVIAGVIEPPSAKPVMIKDNVMVGANAVILEGVEIGEHSVIAAGAVVIEDIPPYSVVAGVPAKVIKKVDKKTESKTQIIDSLRNLK.

Belongs to the transferase hexapeptide repeat family. DapH subfamily.

It carries out the reaction (S)-2,3,4,5-tetrahydrodipicolinate + acetyl-CoA + H2O = L-2-acetamido-6-oxoheptanedioate + CoA. Its pathway is amino-acid biosynthesis; L-lysine biosynthesis via DAP pathway; LL-2,6-diaminopimelate from (S)-tetrahydrodipicolinate (acetylase route): step 1/3. Its function is as follows. Catalyzes the transfer of an acetyl group from acetyl-CoA to tetrahydrodipicolinate. This is 2,3,4,5-tetrahydropyridine-2,6-dicarboxylate N-acetyltransferase from Thermosipho melanesiensis (strain DSM 12029 / CIP 104789 / BI429).